Consider the following 120-residue polypeptide: Large ribosomal subunit protein bL19 (120 aa).

It belongs to the bacterial ribosomal protein bL19 family.

Its function is as follows. This protein is located at the 30S-50S ribosomal subunit interface and may play a role in the structure and function of the aminoacyl-tRNA binding site. This is Large ribosomal subunit protein bL19 from Chlorobium luteolum (strain DSM 273 / BCRC 81028 / 2530) (Pelodictyon luteolum).